The sequence spans 1046 residues: Nuclear pore complex protein NUP96 (1046 aa).

The region spanning 51–187 is the Peptidase S59 domain; that stretch reads SPDYFLKPCI…GLWKFFVPHF (137 aa). Residues 283 to 295 are compositionally biased toward polar residues; the sequence is RNVRPSQKIAQRN. The tract at residues 283 to 304 is disordered; the sequence is RNVRPSQKIAQRNSHQDPPPVV. Ser-523 bears the Phosphoserine mark.

Part of the nuclear pore complex (NPC). The NPC has an eight-fold symmetrical structure comprising a central transport channel and two rings, the cytoplasmic and nuclear rings, to which eight filaments are attached. The cytoplasmic filaments have loose ends, while the nuclear filaments are joined in a distal ring, forming a nuclear basket. NPCs are highly dynamic in configuration and composition, and can be devided in 3 subcomplexes, the NUP62 subcomplex, the NUP107-160 subcomplex and the NUP93 subcomplex, containing approximately 30 different nucleoporin proteins. Expressed in roots, leaves, stems, flowers and siliques.

The protein resides in the nucleus membrane. It localises to the nucleus. Its subcellular location is the nuclear pore complex. In terms of biological role, contributes to the transfer of mature mRNA from the nucleus to the cytosol. Required for both R gene-mediated and basal disease resistance. RNA export seems to play a critical role in stress responses and regulation of plant growth and development. The chain is Nuclear pore complex protein NUP96 from Arabidopsis thaliana (Mouse-ear cress).